The sequence spans 111 residues: Pyrimidine/purine nucleoside phosphorylase 1 (111 aa).

It belongs to the nucleoside phosphorylase PpnP family.

It carries out the reaction a purine D-ribonucleoside + phosphate = a purine nucleobase + alpha-D-ribose 1-phosphate. The enzyme catalyses adenosine + phosphate = alpha-D-ribose 1-phosphate + adenine. The catalysed reaction is cytidine + phosphate = cytosine + alpha-D-ribose 1-phosphate. It catalyses the reaction guanosine + phosphate = alpha-D-ribose 1-phosphate + guanine. It carries out the reaction inosine + phosphate = alpha-D-ribose 1-phosphate + hypoxanthine. The enzyme catalyses thymidine + phosphate = 2-deoxy-alpha-D-ribose 1-phosphate + thymine. The catalysed reaction is uridine + phosphate = alpha-D-ribose 1-phosphate + uracil. It catalyses the reaction xanthosine + phosphate = alpha-D-ribose 1-phosphate + xanthine. In terms of biological role, catalyzes the phosphorolysis of diverse nucleosides, yielding D-ribose 1-phosphate and the respective free bases. Can use uridine, adenosine, guanosine, cytidine, thymidine, inosine and xanthosine as substrates. Also catalyzes the reverse reactions. The polypeptide is Pyrimidine/purine nucleoside phosphorylase 1 (Psychrobacter cryohalolentis (strain ATCC BAA-1226 / DSM 17306 / VKM B-2378 / K5)).